The sequence spans 175 residues: Translation initiation factor IF-3, chloroplastic (175 aa).

The protein belongs to the IF-3 family. In terms of assembly, monomer.

Its subcellular location is the plastid. The protein localises to the chloroplast. IF-3 binds to the 30S ribosomal subunit and shifts the equilibrium between 70S ribosomes and their 50S and 30S subunits in favor of the free subunits, thus enhancing the availability of 30S subunits on which protein synthesis initiation begins. This is Translation initiation factor IF-3, chloroplastic from Cyanidioschyzon merolae (strain NIES-3377 / 10D) (Unicellular red alga).